A 102-amino-acid chain; its full sequence is MKLTTEQKVAIREILKTKLSMGVSNVVFEKSDGTIRTMKGTRDADFMPTMQTGKLTESTRKESTDMIPVFDVELGAWRGFSIDKLISVNGMKVEHLLQFIGK.

This is an uncharacterized protein from Enterobacteria phage T4 (Bacteriophage T4).